The chain runs to 117 residues: Ig heavy chain V-A2 region K-25 (117 aa).

Gln-1 carries the pyrrolidone carboxylic acid modification. Residues Gln-1 to Asp-106 enclose the Ig-like domain. Cys-21 and Cys-91 form a disulfide bridge.

The protein is Ig heavy chain V-A2 region K-25 of Oryctolagus cuniculus (Rabbit).